The chain runs to 316 residues: Gene 34 protein (316 aa).

The protein belongs to the herpesviridae UL95 family.

In Saimiriine herpesvirus 2 (strain 11) (SaHV-2), this protein is Gene 34 protein (34).